Here is a 690-residue protein sequence, read N- to C-terminus: Lipase 2 (690 aa).

Residues 1–37 (MLRGQEERKYSIRKYSIGVVSVLAATMFVVSSHEAQA) form the signal peptide. The segment covering 52–71 (LNQPGEQGNAITSHQMQSGK) has biased composition (polar residues). The tract at residues 52–266 (LNQPGEQGNA…KPTDKNTDNK (215 aa)) is disordered. The span at 72 to 81 (QLDDMHKENG) shows a compositional bias: basic and acidic residues. Polar residues-rich tracts occupy residues 82–114 (KSGT…NDNQ), 124–171 (SKQS…QPSI), and 185–206 (PTST…AQDA). Composition is skewed to basic and acidic residues over residues 225 to 237 (IDAK…RQSE) and 257 to 266 (KPTDKNTDNK). Residues Ser412 and His645 each act as charge relay system in the active site.

Belongs to the AB hydrolase superfamily. Lipase family.

The protein localises to the secreted. It carries out the reaction a triacylglycerol + H2O = a diacylglycerol + a fatty acid + H(+). The chain is Lipase 2 (lip2) from Staphylococcus aureus (strain NCTC 8325 / PS 47).